A 262-amino-acid chain; its full sequence is Glutamate racemase (262 aa).

Substrate-binding positions include 9–10 and 41–42; these read DS and YG. Cysteine 73 functions as the Proton donor/acceptor in the catalytic mechanism. 74-75 serves as a coordination point for substrate; it reads NT. Cysteine 180 acts as the Proton donor/acceptor in catalysis. Residue 181-182 participates in substrate binding; it reads TH.

The protein belongs to the aspartate/glutamate racemases family.

It catalyses the reaction L-glutamate = D-glutamate. Its pathway is cell wall biogenesis; peptidoglycan biosynthesis. In terms of biological role, provides the (R)-glutamate required for cell wall biosynthesis. The sequence is that of Glutamate racemase from Aliivibrio fischeri (strain ATCC 700601 / ES114) (Vibrio fischeri).